The chain runs to 330 residues: Ribose-phosphate pyrophosphokinase (330 aa).

55–57 contacts ATP; sequence DGE. 2 residues coordinate Mg(2+): histidine 148 and aspartate 187. Residue lysine 211 is part of the active site. D-ribose 5-phosphate is bound by residues arginine 213, aspartate 237, and 241–245; that span reads DTGGT.

The protein belongs to the ribose-phosphate pyrophosphokinase family. Class I subfamily. As to quaternary structure, homohexamer. Requires Mg(2+) as cofactor.

The protein localises to the cytoplasm. It catalyses the reaction D-ribose 5-phosphate + ATP = 5-phospho-alpha-D-ribose 1-diphosphate + AMP + H(+). Its pathway is metabolic intermediate biosynthesis; 5-phospho-alpha-D-ribose 1-diphosphate biosynthesis; 5-phospho-alpha-D-ribose 1-diphosphate from D-ribose 5-phosphate (route I): step 1/1. Involved in the biosynthesis of the central metabolite phospho-alpha-D-ribosyl-1-pyrophosphate (PRPP) via the transfer of pyrophosphoryl group from ATP to 1-hydroxyl of ribose-5-phosphate (Rib-5-P). This Nostoc sp. (strain PCC 7120 / SAG 25.82 / UTEX 2576) protein is Ribose-phosphate pyrophosphokinase.